A 227-amino-acid polypeptide reads, in one-letter code: 3,4-dihydroxy-2-butanone 4-phosphate synthase (227 aa).

Residues 45-46 (RE), Asp50, 158-162 (RRGHT), and Glu182 each bind D-ribulose 5-phosphate. Glu46 is a binding site for Mg(2+). His161 contributes to the Mg(2+) binding site.

This sequence belongs to the DHBP synthase family. Homodimer. The cofactor is Mg(2+). Mn(2+) serves as cofactor.

The enzyme catalyses D-ribulose 5-phosphate = (2S)-2-hydroxy-3-oxobutyl phosphate + formate + H(+). It functions in the pathway cofactor biosynthesis; riboflavin biosynthesis; 2-hydroxy-3-oxobutyl phosphate from D-ribulose 5-phosphate: step 1/1. In terms of biological role, catalyzes the conversion of D-ribulose 5-phosphate to formate and 3,4-dihydroxy-2-butanone 4-phosphate. This chain is 3,4-dihydroxy-2-butanone 4-phosphate synthase, found in Ralstonia nicotianae (strain ATCC BAA-1114 / GMI1000) (Ralstonia solanacearum).